Here is a 712-residue protein sequence, read N- to C-terminus: Integrator complex subunit 9 homolog (712 aa).

Low complexity predominate over residues 47–70 (NNNNNNNNNNNNNNNNNNNNNNNN). The tract at residues 47-73 (NNNNNNNNNNNNNNNNNNNNNNNNSYS) is disordered.

Belongs to the metallo-beta-lactamase superfamily. RNA-metabolizing metallo-beta-lactamase-like family. INTS9 subfamily. In terms of assembly, component of the Integrator complex. The core complex associates with protein phosphatase 2A subunits, to form the Integrator-PP2A (INTAC) complex.

The protein localises to the nucleus. Its subcellular location is the cytoplasm. Component of the integrator complex, a multiprotein complex that terminates RNA polymerase II (Pol II) transcription in the promoter-proximal region of genes. The integrator complex provides a quality checkpoint during transcription elongation by driving premature transcription termination of transcripts that are unfavorably configured for transcriptional elongation: the complex terminates transcription by (1) catalyzing dephosphorylation of the C-terminal domain (CTD) of Pol II subunit polr2a, (2) degrading the exiting nascent RNA transcript via endonuclease activity and (3) promoting the release of Pol II from bound DNA. The integrator complex is also involved in terminating the synthesis of non-coding Pol II transcripts, such as enhancer RNAs (eRNAs), small nuclear RNAs (snRNAs), telomerase RNAs and long non-coding RNAs (lncRNAs). In Dictyostelium discoideum (Social amoeba), this protein is Integrator complex subunit 9 homolog (ints9).